The following is a 218-amino-acid chain: MQLDIKICGLKTEDAIAAALDGGASHVGFIFFPKSPRNVDIETAARLRHLASGRAQAVAVTVDADDEMLDRIVEGMRPDVLQLHGHERPVRVEALKKRYHLPVMKAVSVREASDLEVLPAYRGVADRFLLDAKPPAGAELPGGNGIPFDWSLLASLDGKVDYMLSGGLSAVNIGEALSIARPRGIDISSGVERAPGEKDPDLIRAFFSAVRAARGKRE.

Belongs to the TrpF family.

It carries out the reaction N-(5-phospho-beta-D-ribosyl)anthranilate = 1-(2-carboxyphenylamino)-1-deoxy-D-ribulose 5-phosphate. It functions in the pathway amino-acid biosynthesis; L-tryptophan biosynthesis; L-tryptophan from chorismate: step 3/5. This chain is N-(5'-phosphoribosyl)anthranilate isomerase, found in Chelativorans sp. (strain BNC1).